A 339-amino-acid chain; its full sequence is UPF0324 membrane protein CPE0129 (339 aa).

8 helical membrane-spanning segments follow: residues Ile-12 to Gly-30, Thr-35 to Phe-54, Leu-90 to Ile-112, Tyr-122 to Val-144, Ile-156 to Tyr-178, Val-210 to Phe-232, Trp-259 to Gly-281, and Met-316 to Ile-338.

Belongs to the UPF0324 family.

The protein localises to the cell membrane. This chain is UPF0324 membrane protein CPE0129, found in Clostridium perfringens (strain 13 / Type A).